The following is a 404-amino-acid chain: Demethylphylloquinone reductase NdbB (404 aa).

7–43 (RICILGGGFGGLYTALRLGQLSWEGHTPPEIVLVDQR) lines the FAD pocket. 159–195 (IRIAIVGGGYSGVELAAKLGDRLGERGRIRIIERGKE) lines the NADP(+) pocket.

It belongs to the NADH dehydrogenase family. FAD serves as cofactor.

The enzyme catalyses demethylphylloquinone + NADPH + H(+) = demethylphylloquinol + NADP(+). It participates in cofactor biosynthesis; phylloquinone biosynthesis. Inhibited by dicumarol. In terms of biological role, bifunctional oxidoreductase probably ables to act both on prenyl naphthoquinones and on prenyl benzoquinones. Catalyzes the penultimate step in the biosynthesis of vitamin K1. This is Demethylphylloquinone reductase NdbB from Synechocystis sp. (strain ATCC 27184 / PCC 6803 / Kazusa).